We begin with the raw amino-acid sequence, 221 residues long: Probable glutathione S-transferase (221 aa).

The 80-residue stretch at 4-83 (EEVILLDFWP…YIEEVWKDKA (80 aa)) folds into the GST N-terminal domain. Glutathione is bound by residues S14, K41, I55, and 67 to 68 (ES). Residues 90 to 214 (DPYDRAQARF…PKVLEFVKVL (125 aa)) enclose the GST C-terminal domain.

Belongs to the GST superfamily. HSP26 family. As to expression, root tip-specific expression.

It carries out the reaction RX + glutathione = an S-substituted glutathione + a halide anion + H(+). This chain is Probable glutathione S-transferase, found in Nicotiana tabacum (Common tobacco).